The primary structure comprises 285 residues: Seipin (285 aa).

The Cytoplasmic portion of the chain corresponds to methionine 1–serine 16. A helical transmembrane segment spans residues tyrosine 17 to tyrosine 37. The Lumenal segment spans residues histidine 38–arginine 244. A helical membrane pass occupies residues phenylalanine 245–isoleucine 265. At threonine 266 to serine 285 the chain is on the cytoplasmic side.

This sequence belongs to the seipin family.

The protein resides in the endoplasmic reticulum membrane. Its function is as follows. Involved in lipid metabolism and lipid droplet (LD) morphology, number, and size. Facilitates initiation of LD formation, and ensures that vectorial budding of LDs from the ER is directed towards the cytoplasm. This is Seipin from Saccharomyces cerevisiae (strain ATCC 204508 / S288c) (Baker's yeast).